A 560-amino-acid chain; its full sequence is MESSRVVVGGGLPLANRRNSSFAKPKIQQGTFLPLSRINNVSAPQKCSLHTNPNPMFPFVTRRKSQTNPDCGVVKLGEEDDSCSSLDKLPEVNGVHTGVARPVDIKRELVMLSLPAIAGQAIDPLTLLMETAYIGRLGSVELGSAGVSMAIFNTISKLFNIPLLSVATSFVAEDIAKIAAQDLASEDSQSDIPSQGLPERKQLSSVSTALVLAIGIGIFEALALSLASGPFLRLMGIQSMSEMFIPARQFLVLRALGAPAYVVSLALQGIFRGFKDTKTPVYCLGIGNFLAVFLFPLFIYKFRMGVAGAAISSVISQYTVAILMLILLNKRVILLPPKIGSLKFGDYLKSGGFVLGRTLSVLVTMTVATSMAARQGVFAMAAHQICMQVWLAVSLLTDALASSGQALIASSASKRDFEGVKEVTTFVLKIGVVTGIALAIVLGMSFSSIAGLFSKDPEVLRIVRKGVLFVAATQPITALAFIFDGLHYGMSDFPYAACSMMVVGGISSAFMLYAPAGLGLSGVWVGLSMFMGLRMVAGFSRLMWRKGPWWFMHTSDKRLA.

Residues 1-75 (MESSRVVVGG…QTNPDCGVVK (75 aa)) constitute a chloroplast transit peptide. The next 12 membrane-spanning stretches (helical) occupy residues 109 to 129 (LVML…TLLM), 147 to 167 (VSMA…LSVA), 209 to 229 (ALVL…LASG), 250 to 270 (FLVL…LQGI), 280 to 300 (PVYC…LFIY), 308 to 328 (GAAI…LILL), 353 to 373 (FVLG…SMAA), 389 to 411 (VWLA…IASS), 426 to 446 (FVLK…GMSF), 466 to 486 (GVLF…FDGL), 495 to 515 (YAAC…LYAP), and 523 to 543 (VWVG…SRLM).

This sequence belongs to the multi antimicrobial extrusion (MATE) (TC 2.A.66.1) family. As to expression, ubiquitous.

The protein resides in the plastid. It is found in the chloroplast membrane. This Arabidopsis thaliana (Mouse-ear cress) protein is Protein DETOXIFICATION 45, chloroplastic.